The following is a 503-amino-acid chain: E3 ubiquitin-protein ligase ariadne-1 (503 aa).

Positions 1-11 (MDSDNDNDFCD) are enriched in acidic residues. A disordered region spans residues 1–40 (MDSDNDNDFCDNVDSGNVSSGDDGDDDFGMEVDLPSSADR). The segment covering 12 to 21 (NVDSGNVSSG) has biased composition (low complexity). Residues 129 to 340 (QCEECEICFS…SSWYNCNRYD (212 aa)) form a TRIAD supradomain region. Cys133, Cys136, Cys150, His152, Cys155, Cys158, Cys178, Cys183, Cys223, Cys228, Cys244, Cys246, Cys251, Cys254, His259, Cys264, Cys291, and Cys294 together coordinate Zn(2+). The RING-type 1 zinc finger occupies 133-183 (CEICFSQLPPDSMAGLECGHRFCMPCWHEYLSTKIVAEGLGQTISCAAHGC). The tract at residues 133 to 201 (CEICFSQLPP…VANLVTDARV (69 aa)) is important for interaction with Ubc10. An IBR-type zinc finger spans residues 203–264 (VKYQQLITNS…GENWHDPVKC (62 aa)). An RING-type 2; atypical zinc finger spans residues 291-322 (CPRCSVTIEKDGGCNHMVCKNQNCKNEFCWVC). Residue Cys304 is part of the active site. Cys309, Cys314, Cys319, Cys322, His329, and Cys336 together coordinate Zn(2+). A coiled-coil region spans residues 341-361 (EDEAKTARDAQEKLRSSLARY).

Belongs to the RBR family. Ariadne subfamily. As to quaternary structure, can form homodimers. Interacts (via RING-type 1 zinc finger) with Ubc10. Interacts with the LINC complex member koi. Interacts with park. Interacts with ari-2. Specifically interacts with isoform ECR-A of EcR. Autophosphorylated. In terms of tissue distribution, widely expressed, with prominent levels in the nervous system and female gonads.

The protein resides in the cytoplasm. The protein localises to the nucleus. The enzyme catalyses [E2 ubiquitin-conjugating enzyme]-S-ubiquitinyl-L-cysteine + [acceptor protein]-L-lysine = [E2 ubiquitin-conjugating enzyme]-L-cysteine + [acceptor protein]-N(6)-ubiquitinyl-L-lysine.. In terms of biological role, atypical E3 ubiquitin-protein ligase, which catalyzes ubiquitination of target proteins together with ubiquitin-conjugating enzyme E2 Ubc10. Controls the subcellular localization and morphology of muscle nuclei (myonuclei) by regulating the protein levels and distribution of the LINC (LInker of Nucleoskeleton and Cytoskeleton) complex. Functions by mediating the monoubiquitination of the LINC complex subunit koi leading to its subsequent proteasomal degradation. Appears to function, at least partially redundantly, with the RBR E3 ligase family member park in nuclear localization and morphology. Likely to function in metamorphosis by regulating the proteins levels of EcR isoform A (ECR-A) and its heterodimeric partner usp, via the ubiquitination and subsequent degradation of ECR-A. The sequence is that of E3 ubiquitin-protein ligase ariadne-1 from Drosophila melanogaster (Fruit fly).